The sequence spans 413 residues: Serine hydroxymethyltransferase (413 aa).

(6S)-5,6,7,8-tetrahydrofolate contacts are provided by residues L119 and G123–L125. The residue at position 228 (K228) is an N6-(pyridoxal phosphate)lysine. S351–F353 serves as a coordination point for (6S)-5,6,7,8-tetrahydrofolate.

This sequence belongs to the SHMT family. In terms of assembly, homodimer. The cofactor is pyridoxal 5'-phosphate.

Its subcellular location is the cytoplasm. The enzyme catalyses (6R)-5,10-methylene-5,6,7,8-tetrahydrofolate + glycine + H2O = (6S)-5,6,7,8-tetrahydrofolate + L-serine. It participates in one-carbon metabolism; tetrahydrofolate interconversion. The protein operates within amino-acid biosynthesis; glycine biosynthesis; glycine from L-serine: step 1/1. Functionally, catalyzes the reversible interconversion of serine and glycine with tetrahydrofolate (THF) serving as the one-carbon carrier. This reaction serves as the major source of one-carbon groups required for the biosynthesis of purines, thymidylate, methionine, and other important biomolecules. Also exhibits THF-independent aldolase activity toward beta-hydroxyamino acids, producing glycine and aldehydes, via a retro-aldol mechanism. The sequence is that of Serine hydroxymethyltransferase from Clostridium botulinum (strain Okra / Type B1).